The primary structure comprises 280 residues: Transmembrane protein 119 (280 aa).

A signal peptide spans 1 to 20 (MVPWFLLSLLLLARPVPGVA). Over 21–91 (YSVSLPASFL…IMDFFRQYVM (71 aa)) the chain is Extracellular. Serine 36 carries an O-linked (Xyl...) (chondroitin sulfate) serine glycan. A compositionally biased stretch (low complexity) spans 38–47 (EAEGSSASSP). The disordered stretch occupies residues 38–73 (EAEGSSASSPSLPPPGTPAFSPTPERPQPTALDGPV). Residues 92–112 (LIAVVGSLTFLIMFIVCAALI) traverse the membrane as a helical segment. Residues 113 to 280 (TRQKHKATAY…CACNRVSPSV (168 aa)) are Cytoplasmic-facing. 2 disordered regions span residues 133–162 (VDQR…EGLD) and 181–280 (PARA…SPSV). The span at 148–162 (VPDRAPDSRHEEGLD) shows a compositional bias: basic and acidic residues. Serine 269 carries the phosphoserine modification.

In terms of assembly, interacts with SMAD1, SMAD5 and RUNX2. As to expression, expressed in spermatocytes and spermatids in the developing testis (at protein level). Expressed in the brain, heart, lung, spleen, skeletal muscle, ovary, testis and epididymis. Predominantly expressed in osteoblasts.

Its subcellular location is the cell membrane. The protein resides in the cytoplasm. It localises to the endoplasmic reticulum membrane. The protein localises to the secreted. Its function is as follows. Plays an important role in bone formation and normal bone mineralization. Promotes the differentiation of myoblasts into osteoblasts. May induce the commitment and differentiation of myoblasts into osteoblasts through an enhancement of BMP2 production and interaction with the BMP-RUNX2 pathway. Up-regulates the expression of ATF4 which plays a central role in osteoblast differentiation. Essential for normal spermatogenesis and late testicular differentiation. The sequence is that of Transmembrane protein 119 (Tmem119) from Mus musculus (Mouse).